An 876-amino-acid polypeptide reads, in one-letter code: Valine--tRNA ligase (876 aa).

A 'HIGH' region motif is present at residues 44 to 54 (PNVTGKLHLGH). Residues 520–524 (KMSKS) carry the 'KMSKS' region motif. K523 serves as a coordination point for ATP. Residues 806–876 (EGLIDMDKEI…VKLRINQLKA (71 aa)) adopt a coiled-coil conformation.

This sequence belongs to the class-I aminoacyl-tRNA synthetase family. ValS type 1 subfamily. In terms of assembly, monomer.

Its subcellular location is the cytoplasm. The enzyme catalyses tRNA(Val) + L-valine + ATP = L-valyl-tRNA(Val) + AMP + diphosphate. Functionally, catalyzes the attachment of valine to tRNA(Val). As ValRS can inadvertently accommodate and process structurally similar amino acids such as threonine, to avoid such errors, it has a 'posttransfer' editing activity that hydrolyzes mischarged Thr-tRNA(Val) in a tRNA-dependent manner. The sequence is that of Valine--tRNA ligase from Staphylococcus saprophyticus subsp. saprophyticus (strain ATCC 15305 / DSM 20229 / NCIMB 8711 / NCTC 7292 / S-41).